A 402-amino-acid polypeptide reads, in one-letter code: MKLMTMPSEFQKALPILTKIKEAGYEAYFVGGSVRDVLLERPIHDVDIATSSYPEETKAIFNRTVDVGIEHGTVLVLENGGEYEITTFRTEDIYVDYRRPSQVSFVRSLEEDLKRRDFTVNALALDENGQVIDKFRGLIDLKQKRLRAVGKAEERFEEDALRIMRGFRFAASLDFDIEAITFEAMRSHSPLLEKISVERSFTEFDKLLMAPHWRKGISAMIACQAYDYLPGLKQQEAGLNHLIVSLKDNFTFSDYHQAWAYVMISLAIEDPKSFLKAWKTSNDFQRYVTKLIALYRIRQERSFEKLDIYQYGKKMASLVEDLRKAQSLSVDMDRINTLDQALVIHDKHDIVLNGSHLIKDFGMKSGPQLGLMLEKVELAIVEGRLDNDFTTIEAFVREELAT.

Residues G32 and R35 each contribute to the ATP site. G32 and R35 together coordinate CTP. Mg(2+) is bound by residues D45 and D47. R116, D159, R162, R165, and R168 together coordinate ATP. R116, D159, R162, R165, and R168 together coordinate CTP.

The protein belongs to the tRNA nucleotidyltransferase/poly(A) polymerase family. Bacterial CCA-adding enzyme type 3 subfamily. In terms of assembly, homodimer. Mg(2+) is required as a cofactor.

It catalyses the reaction a tRNA precursor + 2 CTP + ATP = a tRNA with a 3' CCA end + 3 diphosphate. It carries out the reaction a tRNA with a 3' CCA end + 2 CTP + ATP = a tRNA with a 3' CCACCA end + 3 diphosphate. Catalyzes the addition and repair of the essential 3'-terminal CCA sequence in tRNAs without using a nucleic acid template. Adds these three nucleotides in the order of C, C, and A to the tRNA nucleotide-73, using CTP and ATP as substrates and producing inorganic pyrophosphate. tRNA 3'-terminal CCA addition is required both for tRNA processing and repair. Also involved in tRNA surveillance by mediating tandem CCA addition to generate a CCACCA at the 3' terminus of unstable tRNAs. While stable tRNAs receive only 3'-terminal CCA, unstable tRNAs are marked with CCACCA and rapidly degraded. This is CCA-adding enzyme from Streptococcus pyogenes serotype M1.